A 355-amino-acid chain; its full sequence is MSRTMVIMAGGTGGHVFPGLAVAHRLQADGWNIHWLGTPDRMEADLVPAHGFPIEFINIRGLRNHGLVRKLLAPFQICKAVLQAFMILRRIRPDVVLGMGGYAAGPGGVAAKLLGIPVVLHEQNAAAGLTNRLLAKIATRILMGFEGAFPLTERSRVVGNPVRDEFLQLAQKPLKKYHTGNPLKILIVGGSLGARPLNQIVPHALAKLNNIDVRHQSGKGNASAVSDLYQSLGVTTVTVTEFITDMAAAYEWADLLICRAGALTVAEVAAAGIPAVFVPLPHAVDDHQTRNAESLTRRGAAVLMPQKEMTADKLAELIAQWQVDPRQLQKIAQLSRAAAILDATDRVVSECKALI.

Residues 12–14, N124, R163, S191, I243, 262–267, and Q288 contribute to the UDP-N-acetyl-alpha-D-glucosamine site; these read TGG and ALTVAE.

This sequence belongs to the glycosyltransferase 28 family. MurG subfamily.

The protein localises to the cell inner membrane. The catalysed reaction is di-trans,octa-cis-undecaprenyl diphospho-N-acetyl-alpha-D-muramoyl-L-alanyl-D-glutamyl-meso-2,6-diaminopimeloyl-D-alanyl-D-alanine + UDP-N-acetyl-alpha-D-glucosamine = di-trans,octa-cis-undecaprenyl diphospho-[N-acetyl-alpha-D-glucosaminyl-(1-&gt;4)]-N-acetyl-alpha-D-muramoyl-L-alanyl-D-glutamyl-meso-2,6-diaminopimeloyl-D-alanyl-D-alanine + UDP + H(+). It participates in cell wall biogenesis; peptidoglycan biosynthesis. Cell wall formation. Catalyzes the transfer of a GlcNAc subunit on undecaprenyl-pyrophosphoryl-MurNAc-pentapeptide (lipid intermediate I) to form undecaprenyl-pyrophosphoryl-MurNAc-(pentapeptide)GlcNAc (lipid intermediate II). The protein is UDP-N-acetylglucosamine--N-acetylmuramyl-(pentapeptide) pyrophosphoryl-undecaprenol N-acetylglucosamine transferase of Tolumonas auensis (strain DSM 9187 / NBRC 110442 / TA 4).